Reading from the N-terminus, the 100-residue chain is RxLR effector protein Avrblb2 (100 aa).

The signal sequence occupies residues 1 to 22 (MRSFLYGVLAFAVLARSSAVAA). A RxLR-dEER motif is present at residues 43 to 57 (RSLRIEAQEVIQSGR). The short motif at 78–82 (RPDIK) is the Calmodulin-binding motif element.

This sequence belongs to the RxLR effector family. In terms of assembly, interacts with the host papain-like cysteine protease C14. Interacts with the host calmodulin.

It is found in the secreted. Its subcellular location is the host cell membrane. Functionally, secreted effector that acts as an elicitor of hypersensitive response (HR) specifically on plants carrying defense protein Rpi-blb2. Enhances P.infestans colonization of Nicotiana benthamiana leaves. Interacts with, and subsequently prevents secretion into the apoplast of the host papain-like cysteine protease C14, thus promoting virulence by interfering with the execution of host defenses. Associates with calmodulin at the host plasma membrane to interfere with plant defense-associated calcium signaling in hosts. The polypeptide is RxLR effector protein Avrblb2 (Phytophthora infestans (strain T30-4) (Potato late blight agent)).